Consider the following 314-residue polypeptide: tRNA pseudouridine synthase B (314 aa).

Residue His43 coordinates substrate. Catalysis depends on Asp48, which acts as the Nucleophile. Positions 76, 179, and 200 each coordinate substrate.

Belongs to the pseudouridine synthase TruB family. Type 1 subfamily.

It catalyses the reaction uridine(55) in tRNA = pseudouridine(55) in tRNA. Its function is as follows. Responsible for synthesis of pseudouridine from uracil-55 in the psi GC loop of transfer RNAs. The chain is tRNA pseudouridine synthase B from Pectobacterium atrosepticum (strain SCRI 1043 / ATCC BAA-672) (Erwinia carotovora subsp. atroseptica).